The following is a 254-amino-acid chain: UPF0246 protein CPF_2407 (254 aa).

The protein belongs to the UPF0246 family.

This Clostridium perfringens (strain ATCC 13124 / DSM 756 / JCM 1290 / NCIMB 6125 / NCTC 8237 / Type A) protein is UPF0246 protein CPF_2407.